The following is a 470-amino-acid chain: Glutamate--tRNA ligase (470 aa).

A 'HIGH' region motif is present at residues 9-19; sequence PSPTGFLHVGG. The short motif at 236–240 is the 'KMSKS' region element; it reads RLSKR. Position 239 (Lys-239) interacts with ATP.

This sequence belongs to the class-I aminoacyl-tRNA synthetase family. Glutamate--tRNA ligase type 1 subfamily. As to quaternary structure, monomer.

It is found in the cytoplasm. It carries out the reaction tRNA(Glu) + L-glutamate + ATP = L-glutamyl-tRNA(Glu) + AMP + diphosphate. Its function is as follows. Catalyzes the attachment of glutamate to tRNA(Glu) in a two-step reaction: glutamate is first activated by ATP to form Glu-AMP and then transferred to the acceptor end of tRNA(Glu). The protein is Glutamate--tRNA ligase of Legionella pneumophila (strain Paris).